Here is a 266-residue protein sequence, read N- to C-terminus: Undecaprenyl-diphosphatase (266 aa).

8 consecutive transmembrane segments (helical) span residues 1–21 (MTWLEIVVLALIQGLTEFLPI), 39–59 (QGLAFDVAVHVGTLLAVMVYF), 87–107 (WAVILGTIPACVAGLLLDSWI), 111–131 (LRSALVIALTTIGFGVLLGMA), 143–163 (FTLKDALIIGVSQALALIPGT), 186–206 (FSFLLSIPLIAAAGLFKGLEL), 217–237 (EIAGATLISAVSAYACIHLFL), and 243–263 (IGFMPFVIYRMLLGAGLLVWL).

The protein belongs to the UppP family.

It localises to the cell inner membrane. The enzyme catalyses di-trans,octa-cis-undecaprenyl diphosphate + H2O = di-trans,octa-cis-undecaprenyl phosphate + phosphate + H(+). Catalyzes the dephosphorylation of undecaprenyl diphosphate (UPP). Confers resistance to bacitracin. The protein is Undecaprenyl-diphosphatase of Hahella chejuensis (strain KCTC 2396).